We begin with the raw amino-acid sequence, 402 residues long: Ketol-acid reductoisomerase, mitochondrial (402 aa).

The N-terminal 26 residues, 1 to 26 (MAARNCTKALRPLARQLATPAVQRRT), are a transit peptide targeting the mitochondrion. Positions 63 to 252 (KEEVHERADW…AVGSGYLYET (190 aa)) constitute a KARI N-terminal Rossmann domain. NADP(+) contacts are provided by residues 90-99 (GYGSQGHGQG), 114-119 (RKNGKS), and 152-156 (SDAAQ). Residue H177 is part of the active site. Residues 253–400 (TFEKEVYSDL…KAVRSLRPEN (148 aa)) form the KARI C-terminal knotted domain. Mg(2+) is bound by residues D261, E265, E297, and E301. Residue S323 participates in substrate binding.

It belongs to the ketol-acid reductoisomerase family. The cofactor is Mg(2+).

It localises to the mitochondrion. It catalyses the reaction (2R)-2,3-dihydroxy-3-methylbutanoate + NADP(+) = (2S)-2-acetolactate + NADPH + H(+). The catalysed reaction is (2R,3R)-2,3-dihydroxy-3-methylpentanoate + NADP(+) = (S)-2-ethyl-2-hydroxy-3-oxobutanoate + NADPH + H(+). Its pathway is amino-acid biosynthesis; L-isoleucine biosynthesis; L-isoleucine from 2-oxobutanoate: step 2/4. It participates in amino-acid biosynthesis; L-valine biosynthesis; L-valine from pyruvate: step 2/4. The polypeptide is Ketol-acid reductoisomerase, mitochondrial (ilv-2) (Neurospora crassa (strain ATCC 24698 / 74-OR23-1A / CBS 708.71 / DSM 1257 / FGSC 987)).